The sequence spans 159 residues: uncharacterized protein (159 aa).

This sequence to M.jannaschii MJECL20.

This is an uncharacterized protein from Methanocaldococcus jannaschii (strain ATCC 43067 / DSM 2661 / JAL-1 / JCM 10045 / NBRC 100440) (Methanococcus jannaschii).